We begin with the raw amino-acid sequence, 406 residues long: Peptidyl-alpha-hydroxyglycine alpha-amidating lyase 2 (406 aa).

The first 19 residues, 1 to 19 (MSRLLFVALLAISLGYVAS), serve as a signal peptide directing secretion. NHL repeat units follow at residues 168-209 (GAIK…FKPF), 218-261 (GKRF…FNAA), 264-308 (LLRT…PKAG), and 358-402 (DPRS…RVWK). Disulfide bonds link C231-C251 and C293-C304.

Belongs to the peptidyl-alpha-hydroxyglycine alpha-amidating lyase family. Zn(2+) is required as a cofactor. N-glycosylated. Only found in a subset of neurons distributed throughout all levels of the central nervous system (CNS). Present in at least some neuroendocrine cells. In adult brains, it is only present in a small handful of cells, the majority of which being distributed in distal parts of the medulla, with a higher expression in the posterior surface of the brain (at protein level).

Its subcellular location is the secreted. It catalyses the reaction a [peptide]-C-terminal (2S)-2-hydroxyglycine = a [peptide]-C-terminal amide + glyoxylate. Its function is as follows. Peptidyl-alpha-hydroxylglycine alpha-amidating lyase that catalyzes an essential reaction in C-terminal alpha-amidation of peptides. Mediates the dismutation of the unstable peptidyl(2-hydroxyglycine) intermediate to glyoxylate and the corresponding desglycine peptide amide. C-terminal amidation of peptides such as neuropeptides is essential for full biological activity. This chain is Peptidyl-alpha-hydroxyglycine alpha-amidating lyase 2 (Pal2), found in Drosophila melanogaster (Fruit fly).